The primary structure comprises 190 residues: Putative histone H1.6 (190 aa).

Residues 1–29 (MSDVAVAETPAVKTPTKAPKANATKVPKV) are disordered. Residue Ser2 is modified to N-acetylserine. A compositionally biased stretch (low complexity) spans 9–29 (TPAVKTPTKAPKANATKVPKV). In terms of domain architecture, H15 spans 34 to 110 (AHPPFINMVT…GATGRFRVAE (77 aa)). A disordered region spans residues 141–190 (KKTGDKVKKAKSPKKIAKPAAKKATKSPSKKVAPKKAAAKPAKKTAALKA). Over residues 148–183 (KKAKSPKKIAKPAAKKATKSPSKKVAPKKAAAKPAK) the composition is skewed to basic residues.

The protein belongs to the histone H1/H5 family.

The protein resides in the nucleus. It localises to the chromosome. Histones H1 are necessary for the condensation of nucleosome chains into higher-order structures. The sequence is that of Putative histone H1.6 (hil-6) from Caenorhabditis elegans.